The primary structure comprises 286 residues: Lipid phosphate phosphatase epsilon 2, chloroplastic (286 aa).

A chloroplast-targeting transit peptide spans 1 to 60; it reads MAASSSSLLLLHKPTYNFHFAASSVPTYINSARFRISSSIFPLDRRRRRRIWSVSGFKSM. Transmembrane regions (helical) follow at residues 133–149, 173–193, 194–214, 226–246, and 260–280; these read LWAV…SVAL, AQSI…WLGT, NVLS…FTWL, VVVG…TWNS, and IALF…VLLN.

It belongs to the PA-phosphatase related phosphoesterase family. As to expression, expressed in root tips, root branch points, cotyledons and leaves.

It localises to the plastid. The protein localises to the chloroplast inner membrane. Inhibited by Mg(2+). Exhibits phosphatidate phosphatase (PAP) activity in vitro. May play a secondary role as PAP in plastids. In Arabidopsis thaliana (Mouse-ear cress), this protein is Lipid phosphate phosphatase epsilon 2, chloroplastic (LPPE2).